Consider the following 452-residue polypeptide: Pup--protein ligase (452 aa).

Glutamate 9 contributes to the Mg(2+) binding site. Position 53 (arginine 53) interacts with ATP. Residue tyrosine 55 participates in Mg(2+) binding. Residue aspartate 57 is the Proton acceptor of the active site. Residue glutamate 63 participates in Mg(2+) binding. 2 residues coordinate ATP: threonine 66 and tryptophan 419.

It belongs to the Pup ligase/Pup deamidase family. Pup-conjugating enzyme subfamily.

The catalysed reaction is ATP + [prokaryotic ubiquitin-like protein]-L-glutamate + [protein]-L-lysine = ADP + phosphate + N(6)-([prokaryotic ubiquitin-like protein]-gamma-L-glutamyl)-[protein]-L-lysine.. Its pathway is protein degradation; proteasomal Pup-dependent pathway. It functions in the pathway protein modification; protein pupylation. Its function is as follows. Catalyzes the covalent attachment of the prokaryotic ubiquitin-like protein modifier Pup to the proteasomal substrate proteins, thereby targeting them for proteasomal degradation. This tagging system is termed pupylation. The ligation reaction involves the side-chain carboxylate of the C-terminal glutamate of Pup and the side-chain amino group of a substrate lysine. This chain is Pup--protein ligase, found in Saccharomonospora viridis (strain ATCC 15386 / DSM 43017 / JCM 3036 / CCUG 5913 / NBRC 12207 / NCIMB 9602 / P101) (Thermoactinomyces viridis).